A 543-amino-acid polypeptide reads, in one-letter code: Sensor histidine kinase DcuS (543 aa).

At 1–20 the chain is on the cytoplasmic side; the sequence is MRHSLPYRMLRKRPMKLSTT. The helical transmembrane segment at 21–41 threads the bilayer; that stretch reads VILMVSAVLFSVLLVVHLIYF. Topologically, residues 42-181 are periplasmic; it reads SQISDMTRDG…VTQQINDSRW (140 aa). Residues 107–110, K121, 140–142, and R147 each bind (R)-malate; these read RYSH and GFL. The helical transmembrane segment at 182–202 threads the bilayer; it reads SIIWSVLFGMLVGLIGTCILV. Topologically, residues 203–543 are cytoplasmic; sequence KVLKKILFGL…IPWDGERSNR (341 aa). The region spanning 212–323 is the PAS domain; that stretch reads LEPYEISTLF…IIGAISTFRD (112 aa). Residues 346–538 enclose the Histidine kinase domain; the sequence is ERSHEFMNKL…QFFVQIPWDG (193 aa). Residue H349 is modified to Phosphohistidine; by autocatalysis.

As to quaternary structure, homodimer. Autophosphorylated. The phosphoryl group is rapidly transferred to DcuR.

It is found in the cell inner membrane. It carries out the reaction ATP + protein L-histidine = ADP + protein N-phospho-L-histidine.. Its function is as follows. Member of the two-component regulatory system DcuR/DcuS. Involved in the C4-dicarboxylate-stimulated regulation of the genes encoding the anaerobic fumarate respiratory system (frdABCD; nuoAN; dcuB; sdhCDAB; etc.). Weakly regulates the aerobic C4-dicarboxylate transporter dctA. Activates DcuR by phosphorylation. The sequence is that of Sensor histidine kinase DcuS (dcuS) from Escherichia coli O157:H7.